Consider the following 501-residue polypeptide: GDP-fucose protein O-fucosyltransferase 4 (501 aa).

Topologically, residues 1–10 are cytoplasmic; it reads MLLQMAGRGK. Residues 11–31 traverse the membrane as a helical; Signal-anchor for type II membrane protein segment; sequence MVPCVCLGLLGVLCWVWVSFA. Topologically, residues 32-501 are lumenal; sequence SFPDEQLSLG…MAVRRARGKN (470 aa). Asparagine 173 is a glycosylation site (N-linked (GlcNAc...) asparagine). Residues cysteine 396 and cysteine 399 are joined by a disulfide bond. N-linked (GlcNAc...) asparagine glycans are attached at residues asparagine 428 and asparagine 478.

It belongs to the glycosyltransferase 10 family.

The protein resides in the endoplasmic reticulum membrane. It catalyses the reaction L-threonyl-[protein] + GDP-beta-L-fucose = 3-O-(alpha-L-fucosyl)-L-threonyl-[protein] + GDP + H(+). The enzyme catalyses L-seryl-[protein] + GDP-beta-L-fucose = 3-O-(alpha-L-fucosyl)-L-seryl-[protein] + GDP + H(+). It functions in the pathway protein modification; protein glycosylation. In terms of biological role, protein O-fucosyltransferase that specifically catalyzes O-fucosylation of serine or threonine residues in EMI domains of target proteins. Attaches fucose through an O-glycosidic linkage. O-fucosylation of EMI domain-containing proteins may be required for facilitating protein folding and secretion. The protein is GDP-fucose protein O-fucosyltransferase 4 (fut11) of Takifugu rubripes (Japanese pufferfish).